We begin with the raw amino-acid sequence, 497 residues long: 4,4'-diaponeurosporene oxygenase (497 aa).

Residue 7 to 19 (VIGGGLGGISAAI) participates in FAD binding.

This sequence belongs to the carotenoid/retinoid oxidoreductase family. CrtP subfamily. The cofactor is FAD.

The catalysed reaction is all-trans-4,4'-diaponeurosporene + 2 AH2 + 2 O2 = 4,4'-diaponeurosporenal + 2 A + 3 H2O. Its pathway is carotenoid biosynthesis; staphyloxanthin biosynthesis; staphyloxanthin from farnesyl diphosphate: step 3/5. Functionally, involved in the biosynthesis of the yellow-orange carotenoid staphyloxanthin, which plays a role in the virulence via its protective function against oxidative stress. Catalyzes the oxidation of the terminal methyl side group of 4,4'-diaponeurosporene to form 4,4'-diaponeurosporen-4-al. The chain is 4,4'-diaponeurosporene oxygenase from Staphylococcus aureus (strain USA300).